Reading from the N-terminus, the 1571-residue chain is Pentafunctional AROM polypeptide 2 (1571 aa).

The tract at residues methionine 1–asparagine 380 is 3-dehydroquinate synthase. Residues aspartate 44–asparagine 46, glutamate 81–lysine 84, glycine 112–valine 114, and aspartate 117 contribute to the NAD(+) site. Residue arginine 128 coordinates 7-phospho-2-dehydro-3-deoxy-D-arabino-heptonate. An NAD(+)-binding site is contributed by threonine 137–threonine 138. The 7-phospho-2-dehydro-3-deoxy-D-arabino-heptonate site is built by aspartate 144 and lysine 150. Lysine 159 is a binding site for NAD(+). Asparagine 160 contacts 7-phospho-2-dehydro-3-deoxy-D-arabino-heptonate. NAD(+) is bound by residues phenylalanine 177–threonine 180 and asparagine 188. Glutamate 192 is a binding site for Zn(2+). Residues glutamate 192–lysine 195 and lysine 246 each bind 7-phospho-2-dehydro-3-deoxy-D-arabino-heptonate. The active-site Proton acceptor; for 3-dehydroquinate synthase activity is the glutamate 256. Residues arginine 260–asparagine 264 and histidine 267 contribute to the 7-phospho-2-dehydro-3-deoxy-D-arabino-heptonate site. Histidine 267 provides a ligand contact to Zn(2+). Histidine 271 (proton acceptor; for 3-dehydroquinate synthase activity) is an active-site residue. 7-phospho-2-dehydro-3-deoxy-D-arabino-heptonate contacts are provided by histidine 283 and lysine 352. Position 283 (histidine 283) interacts with Zn(2+). The tract at residues valine 393–valine 838 is EPSP synthase. Cysteine 820 serves as the catalytic For EPSP synthase activity. The shikimate kinase stretch occupies residues asparagine 859–serine 1051. Glycine 866–threonine 873 provides a ligand contact to ATP. The segment at leucine 1052–glutamate 1273 is 3-dehydroquinase. Histidine 1175 functions as the Proton acceptor; for 3-dehydroquinate dehydratase activity in the catalytic mechanism. The active-site Schiff-base intermediate with substrate; for 3-dehydroquinate dehydratase activity is the lysine 1203. The tract at residues alanine 1286–lysine 1571 is shikimate dehydrogenase.

The protein in the N-terminal section; belongs to the sugar phosphate cyclases superfamily. Dehydroquinate synthase family. This sequence in the 2nd section; belongs to the EPSP synthase family. It in the 3rd section; belongs to the shikimate kinase family. In the 4th section; belongs to the type-I 3-dehydroquinase family. The protein in the C-terminal section; belongs to the shikimate dehydrogenase family. Homodimer. Zn(2+) serves as cofactor.

Its subcellular location is the cytoplasm. The enzyme catalyses 7-phospho-2-dehydro-3-deoxy-D-arabino-heptonate = 3-dehydroquinate + phosphate. It catalyses the reaction 3-dehydroquinate = 3-dehydroshikimate + H2O. It carries out the reaction shikimate + NADP(+) = 3-dehydroshikimate + NADPH + H(+). The catalysed reaction is shikimate + ATP = 3-phosphoshikimate + ADP + H(+). The enzyme catalyses 3-phosphoshikimate + phosphoenolpyruvate = 5-O-(1-carboxyvinyl)-3-phosphoshikimate + phosphate. It participates in metabolic intermediate biosynthesis; chorismate biosynthesis; chorismate from D-erythrose 4-phosphate and phosphoenolpyruvate: step 2/7. It functions in the pathway metabolic intermediate biosynthesis; chorismate biosynthesis; chorismate from D-erythrose 4-phosphate and phosphoenolpyruvate: step 3/7. Its pathway is metabolic intermediate biosynthesis; chorismate biosynthesis; chorismate from D-erythrose 4-phosphate and phosphoenolpyruvate: step 4/7. The protein operates within metabolic intermediate biosynthesis; chorismate biosynthesis; chorismate from D-erythrose 4-phosphate and phosphoenolpyruvate: step 5/7. It participates in metabolic intermediate biosynthesis; chorismate biosynthesis; chorismate from D-erythrose 4-phosphate and phosphoenolpyruvate: step 6/7. Functionally, the AROM polypeptide catalyzes 5 consecutive enzymatic reactions in prechorismate polyaromatic amino acid biosynthesis. This chain is Pentafunctional AROM polypeptide 2, found in Talaromyces marneffei (strain ATCC 18224 / CBS 334.59 / QM 7333) (Penicillium marneffei).